The following is a 360-amino-acid chain: Peptide chain release factor 1 (360 aa).

Gln234 carries the post-translational modification N5-methylglutamine. Positions 285 to 305 (RAQGIAEDRKSQVGTGDRSER) are disordered.

The protein belongs to the prokaryotic/mitochondrial release factor family. Methylated by PrmC. Methylation increases the termination efficiency of RF1.

The protein localises to the cytoplasm. In terms of biological role, peptide chain release factor 1 directs the termination of translation in response to the peptide chain termination codons UAG and UAA. The chain is Peptide chain release factor 1 from Clostridium beijerinckii (strain ATCC 51743 / NCIMB 8052) (Clostridium acetobutylicum).